The primary structure comprises 293 residues: GDT1-like protein 3 (293 aa).

A signal peptide spans 1–25 (MGLISNPTRLILVATIFFLVSSISG). Helical transmembrane passes span 89–109 (FSMI…ALMA), 115–135 (ATVL…STGL), 148–168 (TNSA…YIAW), 200–220 (LFSR…FLAE), 238–258 (AIGV…LAVV), and 272–292 (VATV…FYPP).

The protein belongs to the GDT1 family.

It is found in the membrane. In Arabidopsis thaliana (Mouse-ear cress), this protein is GDT1-like protein 3.